Reading from the N-terminus, the 388-residue chain is Peptide chain release factor subunit 1 (388 aa).

It belongs to the eukaryotic release factor 1 family. Heterodimer of two subunits, one of which binds GTP.

The protein localises to the cytoplasm. Directs the termination of nascent peptide synthesis (translation) in response to the termination codons UAA, UAG and UGA. The protein is Peptide chain release factor subunit 1 (prf1) of Pyrobaculum aerophilum (strain ATCC 51768 / DSM 7523 / JCM 9630 / CIP 104966 / NBRC 100827 / IM2).